We begin with the raw amino-acid sequence, 307 residues long: Small ribosomal subunit biogenesis GTPase RsgA (307 aa).

A CP-type G domain is found at 64–229; sequence KNSLIRPSIA…IADTPGFSSL (166 aa). GTP is bound by residues 113-116 and 172-180; these read SKLD and GQTGAGKTT. Residues cysteine 253, cysteine 258, histidine 260, and cysteine 266 each contribute to the Zn(2+) site.

The protein belongs to the TRAFAC class YlqF/YawG GTPase family. RsgA subfamily. Monomer. Associates with 30S ribosomal subunit, binds 16S rRNA. The cofactor is Zn(2+).

Its subcellular location is the cytoplasm. Functionally, one of several proteins that assist in the late maturation steps of the functional core of the 30S ribosomal subunit. Helps release RbfA from mature subunits. May play a role in the assembly of ribosomal proteins into the subunit. Circularly permuted GTPase that catalyzes slow GTP hydrolysis, GTPase activity is stimulated by the 30S ribosomal subunit. The chain is Small ribosomal subunit biogenesis GTPase RsgA from Lactococcus lactis subsp. lactis (strain IL1403) (Streptococcus lactis).